A 2177-amino-acid chain; its full sequence is Brefeldin A-inhibited guanine nucleotide-exchange protein 3 (2177 aa).

A compositionally biased stretch (low complexity) spans 282–295 (TSSTSTSLESDSAS). The disordered stretch occupies residues 282–301 (TSSTSTSLESDSASPGVSDH). The residue at position 471 (Ser-471) is a Phosphoserine. Positions 511–524 (TGQTTLEGELGQTT) are enriched in polar residues. 3 disordered regions span residues 511-542 (TGQTTLEGELGQTTPEDHSGNHKNSLKSPAIP), 617-636 (AAEKDSGRSDVSDIGSDNCS), and 1031-1076 (DGAS…LSTA). One can recognise an SEC7 domain in the interval 583-796 (RTRSYGSRYS…EELYHQVLDR (214 aa)). Positions 618–627 (AEKDSGRSDV) are enriched in basic and acidic residues. Phosphoserine is present on residues Ser-632 and Ser-636. The segment covering 1032–1047 (GASQPPLTISQPQKAT) has biased composition (polar residues). At Ser-1049 the chain carries Phosphoserine. The helical transmembrane segment at 1492–1512 (GPGFGIYAVVHLLLPVMSVWL) threads the bilayer. 3 disordered regions span residues 1848–1877 (STDSSQQCSSEDEDIFEETAQVSPPRGKEK), 1946–2004 (ESST…RKKE), and 2033–2064 (KQQHNLSAFPKEVKVEKKGEPLGPRGQDSPLL). A compositionally biased stretch (basic and acidic residues) spans 1960–1974 (TPSEDDRSQSREHMG). Ser-1991 carries the phosphoserine modification. 2 stretches are compositionally biased toward basic and acidic residues: residues 1993 to 2004 (KVEKKDPSRKKE) and 2043 to 2052 (KEVKVEKKGE). Phosphoserine occurs at positions 2079, 2081, 2095, 2101, and 2103. The segment at 2082-2103 (AGPELLRQDKRPRSGSTGSSLS) is disordered.

Interacts with PHB2. As to expression, expressed in breast cancer cell lines. Not expressed in normal tissues such as duct, mammary gland, lung, heart, liver, kidnay, bone marrow.

The protein resides in the cytoplasm. The protein localises to the cytoplasmic vesicle. Its subcellular location is the secretory vesicle. It localises to the secretory vesicle membrane. Its function is as follows. Participates in the regulation of systemic glucose homeostasis, where it negatively regulates insulin granule biogenesis in pancreatic islet beta cells. Also regulates glucagon granule production in pancreatic alpha cells. Inhibits nuclear translocation of the transcriptional coregulator PHB2 and may enhance estrogen receptor alpha (ESR1) transcriptional activity in breast cancer cells. The protein is Brefeldin A-inhibited guanine nucleotide-exchange protein 3 of Homo sapiens (Human).